Here is a 343-residue protein sequence, read N- to C-terminus: Endoglucanase C (343 aa).

The active-site Proton donor is the Glu-140. The active-site Nucleophile is Glu-280.

Belongs to the glycosyl hydrolase 5 (cellulase A) family.

It catalyses the reaction Endohydrolysis of (1-&gt;4)-beta-D-glucosidic linkages in cellulose, lichenin and cereal beta-D-glucans.. It functions in the pathway glycan metabolism; cellulose degradation. In terms of biological role, this enzyme catalyzes the endohydrolysis of 1,4-beta-glucosidic linkages in cellulose, lichenin and cereal beta-D-glucans. The sequence is that of Endoglucanase C (celC) from Acetivibrio thermocellus (Hungateiclostridium thermocellum).